Reading from the N-terminus, the 865-residue chain is Serine/threonine-protein kinase greatwall (865 aa).

M1 carries the post-translational modification N-acetylmethionine. The Protein kinase domain maps to 34 to 821 (FTIVKPISRG…MRELKQHPLF (788 aa)). ATP is bound by residues 40–48 (ISRGAFGKV) and K61. D155 (proton acceptor) is an active-site residue. T206 and T221 each carry phosphothreonine. Phosphoserine occurs at positions 362 and 442. T508 bears the Phosphothreonine mark. Phosphoserine occurs at positions 545, 619, 644, and 655. A Phosphothreonine modification is found at T708. Residue S711 is modified to Phosphoserine. T727 carries the post-translational modification Phosphothreonine; by CDK1. The AGC-kinase C-terminal domain occupies 822 to 865 (SEVDWENLQHQTMPFVPQPDDETDTSYFEARNNAQHLTISGFSL). Phosphoserine occurs at positions 861 and 864.

The protein belongs to the protein kinase superfamily. AGC Ser/Thr protein kinase family. Post-translationally, phosphorylation at Thr-727 by CDK1 during M phase activates its kinase activity. Maximum phosphorylation occurs in prometaphase.

The protein localises to the cytoplasm. The protein resides in the cytoskeleton. Its subcellular location is the microtubule organizing center. It localises to the centrosome. It is found in the nucleus. It carries out the reaction L-seryl-[protein] + ATP = O-phospho-L-seryl-[protein] + ADP + H(+). The catalysed reaction is L-threonyl-[protein] + ATP = O-phospho-L-threonyl-[protein] + ADP + H(+). Functionally, serine/threonine kinase that plays a key role in M phase by acting as a regulator of mitosis entry and maintenance. Acts by promoting the inactivation of protein phosphatase 2A (PP2A) during M phase: does not directly inhibit PP2A but acts by mediating phosphorylation and subsequent activation of ARPP19 and ENSA at 'Ser-62' and 'Ser-67', respectively. ARPP19 and ENSA are phosphatase inhibitors that specifically inhibit the PPP2R2D (PR55-delta) subunit of PP2A. Inactivation of PP2A during M phase is essential to keep cyclin-B1-CDK1 activity high. Following DNA damage, it is also involved in checkpoint recovery by being inhibited. The sequence is that of Serine/threonine-protein kinase greatwall (Mastl) from Mus musculus (Mouse).